The sequence spans 411 residues: Dual-specificity RNA methyltransferase RlmN (411 aa).

E124 functions as the Proton acceptor in the catalytic mechanism. The Radical SAM core domain occupies 130–379; that stretch reads EEGRGTLCIS…IRTPRGRDIL (250 aa). C137 and C382 are disulfide-bonded. 3 residues coordinate [4Fe-4S] cluster: C144, C148, and C151. S-adenosyl-L-methionine-binding positions include 208–209, S240, 262–264, and N339; these read GE and SLH. C382 (S-methylcysteine intermediate) is an active-site residue.

This sequence belongs to the radical SAM superfamily. RlmN family. [4Fe-4S] cluster serves as cofactor.

It is found in the cytoplasm. The enzyme catalyses adenosine(2503) in 23S rRNA + 2 reduced [2Fe-2S]-[ferredoxin] + 2 S-adenosyl-L-methionine = 2-methyladenosine(2503) in 23S rRNA + 5'-deoxyadenosine + L-methionine + 2 oxidized [2Fe-2S]-[ferredoxin] + S-adenosyl-L-homocysteine. It carries out the reaction adenosine(37) in tRNA + 2 reduced [2Fe-2S]-[ferredoxin] + 2 S-adenosyl-L-methionine = 2-methyladenosine(37) in tRNA + 5'-deoxyadenosine + L-methionine + 2 oxidized [2Fe-2S]-[ferredoxin] + S-adenosyl-L-homocysteine. In terms of biological role, specifically methylates position 2 of adenine 2503 in 23S rRNA and position 2 of adenine 37 in tRNAs. m2A2503 modification seems to play a crucial role in the proofreading step occurring at the peptidyl transferase center and thus would serve to optimize ribosomal fidelity. The chain is Dual-specificity RNA methyltransferase RlmN from Rhizobium meliloti (strain 1021) (Ensifer meliloti).